We begin with the raw amino-acid sequence, 202 residues long: Imidazoleglycerol-phosphate dehydratase (202 aa).

This sequence belongs to the imidazoleglycerol-phosphate dehydratase family.

Its subcellular location is the cytoplasm. The catalysed reaction is D-erythro-1-(imidazol-4-yl)glycerol 3-phosphate = 3-(imidazol-4-yl)-2-oxopropyl phosphate + H2O. The protein operates within amino-acid biosynthesis; L-histidine biosynthesis; L-histidine from 5-phospho-alpha-D-ribose 1-diphosphate: step 6/9. In Corynebacterium diphtheriae (strain ATCC 700971 / NCTC 13129 / Biotype gravis), this protein is Imidazoleglycerol-phosphate dehydratase.